The sequence spans 85 residues: Large ribosomal subunit protein bL27 (85 aa).

Residues 1-23 (MAHKKAGGSSRNGRDSESKRLGV) form a disordered region.

Belongs to the bacterial ribosomal protein bL27 family.

The protein is Large ribosomal subunit protein bL27 of Methylococcus capsulatus (strain ATCC 33009 / NCIMB 11132 / Bath).